The chain runs to 826 residues: U4/U6 snRNA-associated-splicing factor PRP24 (826 aa).

RRM domains lie at 310–385 (TSVF…EAAG), 386–463 (ITLY…YSDP), 477–554 (REVH…LSVS), and 598–670 (RSFA…AVPQ).

The protein resides in the nucleus. In terms of biological role, functions as a recycling factor of the spliceosome, a machinery that forms on each precursor-messenger RNA (pre-mRNA) and catalyzes the removal of introns. Chaperones the re-annealing of U4 and U6 snRNAs (small nuclear RNAs) released from previous rounds of splicing, an initial step in reforming the U4/U6-U5 tri-snRNP (small nuclear ribonucleoprotein) that can reassemble into another spliceosome complex; this step involves binding U6 and facilitating the unwinding of the U6 internal stem loop, followed by base-pairing of U6 to U4. The protein is U4/U6 snRNA-associated-splicing factor PRP24 of Ophiostoma ulmi (Dutch elm disease fungus).